We begin with the raw amino-acid sequence, 206 residues long: Tumor protein D54 (206 aa).

N-acetylmethionine is present on M1. The segment covering 1 to 14 (MDSAGQDINLNSPN) has biased composition (polar residues). The disordered stretch occupies residues 1-24 (MDSAGQDINLNSPNKGLLSDSMTD). Residues S3, S12, S19, and S21 each carry the phosphoserine modification. A coiled-coil region spans residues 38–82 (VEGLTEAEEEELRAELTKVEEEIVTLRQVLAAKERHCGELKRRLG). Residues S96, S149, and S161 each carry the phosphoserine modification. At T163 the chain carries Phosphothreonine. S166 is modified (phosphoserine). Phosphothreonine is present on T173. Basic and acidic residues predominate over residues 175–185 (KSKVVGDRENG). The segment at 175-206 (KSKVVGDRENGSDSLPSSAGSGDKPLSDPAPF) is disordered. Phosphoserine is present on residues S192 and S195.

Belongs to the TPD52 family. In terms of assembly, forms a homodimer or heterodimer with other members of the family. Interacts with MAL2.

The chain is Tumor protein D54 (TPD52L2) from Pongo abelii (Sumatran orangutan).